The chain runs to 393 residues: NAD(P)H-quinone oxidoreductase subunit H, chloroplastic (393 aa).

This sequence belongs to the complex I 49 kDa subunit family. As to quaternary structure, NDH is composed of at least 16 different subunits, 5 of which are encoded in the nucleus.

The protein resides in the plastid. The protein localises to the chloroplast thylakoid membrane. It catalyses the reaction a plastoquinone + NADH + (n+1) H(+)(in) = a plastoquinol + NAD(+) + n H(+)(out). The catalysed reaction is a plastoquinone + NADPH + (n+1) H(+)(in) = a plastoquinol + NADP(+) + n H(+)(out). In terms of biological role, NDH shuttles electrons from NAD(P)H:plastoquinone, via FMN and iron-sulfur (Fe-S) centers, to quinones in the photosynthetic chain and possibly in a chloroplast respiratory chain. The immediate electron acceptor for the enzyme in this species is believed to be plastoquinone. Couples the redox reaction to proton translocation, and thus conserves the redox energy in a proton gradient. The sequence is that of NAD(P)H-quinone oxidoreductase subunit H, chloroplastic from Chlorokybus atmophyticus (Soil alga).